Here is a 181-residue protein sequence, read N- to C-terminus: Protein OPG161 (181 aa).

Over 1–34 the chain is Intravirion; sequence MMTPENDEEQTSVFSATVYGDKIQGKNKRKRVIG. The helical transmembrane segment at 35-57 threads the bilayer; it reads LCIRISMVISLLSMITMSAFLIV. The Virion surface segment spans residues 58-181; the sequence is RLNQCMSANK…SQEVRKYFCT (124 aa). The N-linked (GlcNAc...) asparagine; by host glycan is linked to Asn-135.

This sequence belongs to the orthopoxvirus OPG161 family. As to quaternary structure, homodimer, disulfide-linked. Interacts with protein OPG190. Interacts (via C-terminus) with protein OPG164. Interacts with OPG162.

Its subcellular location is the virion membrane. It localises to the host membrane. In terms of biological role, forms a complex with OPG162 and OPG190 to coordinate the incorporation of OPG164 into wrapped enveloped virion (EV) membranes and, subsequently, the production of actin tails. Therefore plays an essential role in efficient cell-to-cell spread of viral particles. In Monkeypox virus, this protein is Protein OPG161 (OPG161).